Reading from the N-terminus, the 153-residue chain is Large ribosomal subunit protein uL30 (153 aa).

The protein belongs to the universal ribosomal protein uL30 family. In terms of assembly, part of the 50S ribosomal subunit.

In Methanosarcina mazei (strain ATCC BAA-159 / DSM 3647 / Goe1 / Go1 / JCM 11833 / OCM 88) (Methanosarcina frisia), this protein is Large ribosomal subunit protein uL30.